A 465-amino-acid polypeptide reads, in one-letter code: FAD-dependent monooxygenase pyr5 (465 aa).

An N-terminal signal peptide occupies residues 1–16; the sequence is MRVLIIGGSIAGLTLA. Glu30, Gly44, and Arg103 together coordinate FAD. The active site involves Tyr210. Residues Asp306 and Ala319 each coordinate FAD. Residues 440-456 form a helical membrane-spanning segment; sequence PTFPLTVAGLCLVAIVI.

It belongs to the paxM FAD-dependent monooxygenase family. FAD is required as a cofactor.

Its subcellular location is the membrane. The catalysed reaction is 4-hydroxy-3-[(2E,6E)-farnesyl]-6-(pyridin-3-yl)-2H-pyran-2-one + NADPH + O2 + H(+) = 2-oxo-3-[(8S)-epoxy-(2E,6E)-farnesyl]-6-(pyridin-3-yl)-2H-pyran-4-olate + NADP(+) + H2O. It participates in secondary metabolite biosynthesis; terpenoid biosynthesis. In terms of biological role, FAD-dependent monooxygenase; part of the gene cluster that mediates the biosynthesis of pyripyropene A, a specific human acyl-coenzyme A:cholesterol acyltransferase 2 inhibitor. The first step of the pathway is the synthesis of nicotinyl-CoA from nicotinic acid by the nicotinic acid-CoA ligase pyr1. Nicotinyl-CoA is then a substrate of polyketide synthase pyr2 to produce 4-hydroxy-6-(3-pyridinyl)-2H-pyran-2-one (HPPO) which is further prenylated by the polyprenyl transferase pyr6 to yield farnesyl-HPPO. The next steps consist of an epoxidation of farnesyl-HPPO to epoxyfarnesyl-HPPO by FAD-dependent monooxygenase pyr5 and a cyclization of the terpenoid portion by the terpene cyclase pyr4 to yield deacetyl-pyripyropene E. The 2 cytochrome P450 monooxygenases pyr3 and pyr9, and the 2 acetyltransferases pyr7 and pyr8 are involved in the conversion of deacetyl-pyripyropene E into pyripyropene A through several cycles of oxidation and acetylation steps. Pyr7 acetylates deacetyl-pyripyropene E to pyripyropene E which is oxidized to 11-deacetyl-pyripyropene O by pyr3, which is in turn acetylated into pyripyropene O by pyr8. Pyripyropene O is then oxidized to deacetyl-pyripyropene A by pyr9. Deacetyl-pyripyropene A is finally acetylated to pyripyropene A by pyr8. In Aspergillus fumigatus (strain ATCC MYA-4609 / CBS 101355 / FGSC A1100 / Af293) (Neosartorya fumigata), this protein is FAD-dependent monooxygenase pyr5.